The primary structure comprises 89 residues: Defensin-like protein 147 (89 aa).

An N-terminal signal peptide occupies residues 1–24 (MKKIFQLSFTVFIIFISLVLGVVG). 4 disulfide bridges follow: C34/C82, C46/C66, C51/C79, and C55/C81.

It belongs to the DEFL family. As to expression, expressed in flower buds, but not in stems, roots or rosette leaves.

Its subcellular location is the secreted. The sequence is that of Defensin-like protein 147 (LCR1) from Arabidopsis thaliana (Mouse-ear cress).